A 249-amino-acid polypeptide reads, in one-letter code: Type III pantothenate kinase (249 aa).

Residue 6-13 (DAGNSRIK) participates in ATP binding. Substrate is bound by residues F77 and 98–101 (GVDR). Residue D100 is the Proton acceptor of the active site. A K(+)-binding site is contributed by D121. Residue S124 participates in ATP binding. Position 177 (T177) interacts with substrate.

This sequence belongs to the type III pantothenate kinase family. As to quaternary structure, homodimer. It depends on NH4(+) as a cofactor. K(+) serves as cofactor.

The protein resides in the cytoplasm. It catalyses the reaction (R)-pantothenate + ATP = (R)-4'-phosphopantothenate + ADP + H(+). It functions in the pathway cofactor biosynthesis; coenzyme A biosynthesis; CoA from (R)-pantothenate: step 1/5. Functionally, catalyzes the phosphorylation of pantothenate (Pan), the first step in CoA biosynthesis. The sequence is that of Type III pantothenate kinase from Teredinibacter turnerae (strain ATCC 39867 / T7901).